The following is a 335-amino-acid chain: Glyceraldehyde-3-phosphate dehydrogenase (335 aa).

NAD(+)-binding positions include 13–14 and Gly-111; that span reads TI. Residue 140-142 participates in D-glyceraldehyde 3-phosphate binding; it reads SCN. The Nucleophile role is filled by Cys-141. Arg-169 is an NAD(+) binding site. Residues Thr-171 and 195–196 contribute to the D-glyceraldehyde 3-phosphate site; that span reads HG. Gln-300 contacts NAD(+).

It belongs to the glyceraldehyde-3-phosphate dehydrogenase family. Homotetramer.

It is found in the cytoplasm. The enzyme catalyses D-glyceraldehyde 3-phosphate + phosphate + NADP(+) = (2R)-3-phospho-glyceroyl phosphate + NADPH + H(+). It catalyses the reaction D-glyceraldehyde 3-phosphate + phosphate + NAD(+) = (2R)-3-phospho-glyceroyl phosphate + NADH + H(+). It functions in the pathway carbohydrate degradation; glycolysis; pyruvate from D-glyceraldehyde 3-phosphate: step 1/5. This chain is Glyceraldehyde-3-phosphate dehydrogenase, found in Methanosarcina mazei (strain ATCC BAA-159 / DSM 3647 / Goe1 / Go1 / JCM 11833 / OCM 88) (Methanosarcina frisia).